Reading from the N-terminus, the 711-residue chain is Far upstream element-binding protein 2 (711 aa).

A disordered region spans residues 1 to 147 (MSDYSTGGPP…HPPPRTSMTE (147 aa)). N-acetylserine is present on Ser-2. Pro residues predominate over residues 8–17 (GPPPGPPPPA). 2 stretches are compositionally biased toward gly residues: residues 18–28 (GGGGGAGGAGG) and 36–68 (GAGD…GGPG). Arg-40 is subject to Omega-N-methylarginine. N6-acetyllysine is present on Lys-87. Ser-99 carries the phosphoserine modification. At Thr-100 the chain carries Phosphothreonine. Over residues 110–122 (RQLEDGDQPESKK) the composition is skewed to basic and acidic residues. Residue Lys-121 forms a Glycyl lysine isopeptide (Lys-Gly) (interchain with G-Cter in SUMO1); alternate linkage. A Glycyl lysine isopeptide (Lys-Gly) (interchain with G-Cter in SUMO2); alternate cross-link involves residue Lys-121. Phosphoserine is present on residues Ser-125, Ser-129, Ser-131, Ser-181, Ser-184, Ser-193, and Ser-274. KH domains lie at 144-208 (SMTE…KMML), 233-299 (GTVQ…CEMV), and 322-386 (GGGI…ARII). The disordered stretch occupies residues 392 to 429 (SLRSGPPGPPGGPGMPPGGRGRGRGQGNWGPPGGEMTF). Positions 397–407 (PPGPPGGPGMP) are enriched in pro residues. A compositionally biased stretch (gly residues) spans 408 to 424 (PGGRGRGRGQGNWGPPG). An omega-N-methylarginine mark is found at Arg-411, Arg-413, Arg-415, and Arg-442. The KH 4 domain maps to 424 to 491 (GGEMTFSIPT…QQIDHAKQLI (68 aa)). Position 480 is a phosphoserine (Ser-480). The interval 497–569 (GPLCPVGPGP…HDPSKAAAAA (73 aa)) is disordered. Composition is skewed to pro residues over residues 501 to 520 (PVGP…PFNP) and 528 to 542 (PGAP…PHQY). The stretch at 571–582 (DPNAAWAAYYSH) is repeat 1. Positions 571 to 684 (DPNAAWAAYY…SAAWAEYYRQ (114 aa)) are 4 X 12 AA imperfect repeats. Positions 583–711 (YYQQPPGPVP…PTQQGQQQAQ (129 aa)) are disordered. A compositionally biased stretch (pro residues) spans 587–613 (PPGPVPGPAPAPAAPPAQGEPPQPPPT). 3 tandem repeats follow at residues 617-628 (DYTKAWEEYYKK), 643-654 (DYTKAWEEYYKK), and 673-684 (DYSAAWAEYYRQ).

The protein belongs to the KHSRP family. Part of a ternary complex containing FUBP2, PTBP1, PTBP2 and HNRPH1. Interacts with PARN. Interacts with PQBP1. In terms of processing, phosphorylation at Ser-193 leads to the unfolding of the unstable KH domain 1, creating a site for 14-3-3 YWHAZ binding, which promotes nuclear localization and impairs the RNA degradation function. Detected in neural and non-neural cell lines.

The protein localises to the nucleus. It is found in the cytoplasm. In terms of biological role, binds to the dendritic targeting element and may play a role in mRNA trafficking. Part of a ternary complex that binds to the downstream control sequence (DCS) of the pre-mRNA. Mediates exon inclusion in transcripts that are subject to tissue-specific alternative splicing. May interact with single-stranded DNA from the far-upstream element (FUSE). May activate gene expression. Also involved in degradation of inherently unstable mRNAs that contain AU-rich elements (AREs) in their 3'-UTR, possibly by recruiting degradation machinery to ARE-containing mRNAs. This chain is Far upstream element-binding protein 2 (KHSRP), found in Homo sapiens (Human).